The chain runs to 407 residues: Methylthioribose kinase (407 aa).

ATP is bound by residues asparagine 40, lysine 57, and 111-113 (EDL). Aspartate 229 is a substrate binding site. 246–248 (DAE) contributes to the ATP binding site. Arginine 344 is a substrate binding site.

It belongs to the methylthioribose kinase family. Homodimer.

The catalysed reaction is 5-(methylsulfanyl)-D-ribose + ATP = 5-(methylsulfanyl)-alpha-D-ribose 1-phosphate + ADP + H(+). Its pathway is amino-acid biosynthesis; L-methionine biosynthesis via salvage pathway; S-methyl-5-thio-alpha-D-ribose 1-phosphate from S-methyl-5'-thioadenosine (hydrolase route): step 2/2. Catalyzes the phosphorylation of methylthioribose into methylthioribose-1-phosphate. This Yersinia pseudotuberculosis serotype O:3 (strain YPIII) protein is Methylthioribose kinase.